The primary structure comprises 141 residues: Acetyltransferase YPN_1354 (141 aa).

The N-acetyltransferase domain maps to 1–141 (MEIRIFQQDD…GKRLIVDQEY (141 aa)).

Belongs to the acetyltransferase family. YpeA subfamily.

The sequence is that of Acetyltransferase YPN_1354 from Yersinia pestis bv. Antiqua (strain Nepal516).